A 516-amino-acid chain; its full sequence is Cyclic AMP response element-binding protein A (516 aa).

Phosphoserine occurs at positions 75, 79, and 82. Disordered stretches follow at residues 213–237 (KDEP…SQHQ), 294–338 (KSEK…HLFA), and 353–408 (PAGG…KGST). The span at 221–237 (SSCPASPTSQASSSQHQ) shows a compositional bias: low complexity. Residues 361–392 (RVSRTAASITRSSSGSASASGSSTSSTVTTTR) show a composition bias toward low complexity. The 64-residue stretch at 441–504 (SLKKIRRKIK…ANLLSQLHKL (64 aa)) folds into the bZIP domain. Residues 443 to 463 (KKIRRKIKNKISAQESRRKKK) form a basic motif region. Residues 469–476 (LERRVEIL) are leucine-zipper.

It belongs to the bZIP family. As to quaternary structure, may bind DNA as heterodimers with other bZIP proteins. In all cell types examined, including developing salivary gland in embryos and in adults, brain and optic lobe cell bodies, salivary gland, midgut epithelial cells of the cardia, female ovarian columnar follicle cells and male seminal vesicle, ejaculatory duct, and ejaculatory bulb.

The protein resides in the nucleus. In terms of biological role, transcriptional activator. Binds to fat body-specific enhancers of alcohol dehydrogenase (ADH) and yolk protein genes. BBF-2 may play a role in fat body gene expression. It binds the consensus sequence 5'-T[AC]NACGTAN[TG]C-3'. This Drosophila melanogaster (Fruit fly) protein is Cyclic AMP response element-binding protein A (CrebA).